We begin with the raw amino-acid sequence, 427 residues long: Enolase (427 aa).

A (2R)-2-phosphoglycerate-binding site is contributed by glutamine 163. Residue glutamate 205 is the Proton donor of the active site. Positions 242, 288, and 315 each coordinate Mg(2+). Positions 340, 369, 370, and 391 each coordinate (2R)-2-phosphoglycerate. Lysine 340 functions as the Proton acceptor in the catalytic mechanism.

It belongs to the enolase family. Requires Mg(2+) as cofactor.

It localises to the cytoplasm. Its subcellular location is the secreted. It is found in the cell surface. The enzyme catalyses (2R)-2-phosphoglycerate = phosphoenolpyruvate + H2O. It participates in carbohydrate degradation; glycolysis; pyruvate from D-glyceraldehyde 3-phosphate: step 4/5. Its function is as follows. Catalyzes the reversible conversion of 2-phosphoglycerate (2-PG) into phosphoenolpyruvate (PEP). It is essential for the degradation of carbohydrates via glycolysis. In Cytophaga hutchinsonii (strain ATCC 33406 / DSM 1761 / CIP 103989 / NBRC 15051 / NCIMB 9469 / D465), this protein is Enolase.